The primary structure comprises 124 residues: Small ribosomal subunit protein uS13 (124 aa).

A disordered region spans residues 97 to 124; the sequence is PVRGQRTKTNARTRKGPKRTIAGKKKAR.

Belongs to the universal ribosomal protein uS13 family. As to quaternary structure, part of the 30S ribosomal subunit. Forms a loose heterodimer with protein S19. Forms two bridges to the 50S subunit in the 70S ribosome.

Its function is as follows. Located at the top of the head of the 30S subunit, it contacts several helices of the 16S rRNA. In the 70S ribosome it contacts the 23S rRNA (bridge B1a) and protein L5 of the 50S subunit (bridge B1b), connecting the 2 subunits; these bridges are implicated in subunit movement. Contacts the tRNAs in the A and P-sites. This chain is Small ribosomal subunit protein uS13, found in Mycolicibacterium gilvum (strain PYR-GCK) (Mycobacterium gilvum (strain PYR-GCK)).